We begin with the raw amino-acid sequence, 243 residues long: 1-(5-phosphoribosyl)-5-[(5-phosphoribosylamino)methylideneamino] imidazole-4-carboxamide isomerase (243 aa).

Catalysis depends on D8, which acts as the Proton acceptor. D129 acts as the Proton donor in catalysis.

The protein belongs to the HisA/HisF family.

The protein localises to the cytoplasm. It catalyses the reaction 1-(5-phospho-beta-D-ribosyl)-5-[(5-phospho-beta-D-ribosylamino)methylideneamino]imidazole-4-carboxamide = 5-[(5-phospho-1-deoxy-D-ribulos-1-ylimino)methylamino]-1-(5-phospho-beta-D-ribosyl)imidazole-4-carboxamide. It functions in the pathway amino-acid biosynthesis; L-histidine biosynthesis; L-histidine from 5-phospho-alpha-D-ribose 1-diphosphate: step 4/9. The chain is 1-(5-phosphoribosyl)-5-[(5-phosphoribosylamino)methylideneamino] imidazole-4-carboxamide isomerase from Parvibaculum lavamentivorans (strain DS-1 / DSM 13023 / NCIMB 13966).